The primary structure comprises 101 residues: Precursor of CEP6 (101 aa).

A signal peptide spans 1–26; sequence MKLSVYIILSILFISTVFYEIQFTEA. Residues 27-48 constitute a propeptide that is removed on maturation; that stretch reads RQLRKTDDQDHDDHHFTVGYTD. Positions 29–42 are enriched in basic and acidic residues; that stretch reads LRKTDDQDHDDHHF. Residues 29-101 form a disordered region; the sequence is LRKTDDQDHD…HAVKNNEPNA (73 aa). Residues Pro52, Pro55, and Pro59 each carry the hydroxyproline modification. The propeptide occupies 64-77; the sequence is KMKENEENAGGYKD. Positions 64-79 are enriched in basic and acidic residues; it reads KMKENEENAGGYKDDF. Hydroxyproline occurs at positions 81, 84, and 88. Residues 93 to 101 constitute a propeptide that is removed on maturation; that stretch reads AVKNNEPNA.

This sequence belongs to the C-terminally encoded plant signaling peptide (CEP) family. Interacts with CEP receptors (e.g. CEPR1 and CEPR2). In terms of processing, the mature small signaling peptide is generated by proteolytic processing of the longer precursor. In terms of tissue distribution, expressed in lateral root primordia and in lateral roots excluding the meristem region. Also present in the aerial tissues, such as leaf petioles and the shoot apex region.

Its subcellular location is the secreted. The protein localises to the extracellular space. It is found in the apoplast. Its function is as follows. Extracellular signaling peptide that represses primary root growth rate. Modulates leaf morphology. Regulates systemic nitrogen (N)-demand signaling. Mediates up-regulation of genes involved in N uptake and assimilation pathways. In Arabidopsis thaliana (Mouse-ear cress), this protein is Precursor of CEP6.